The primary structure comprises 376 residues: Lipoyl synthase 2, mitochondrial (376 aa).

Residues C109, C114, C120, C140, C144, C147, and S356 each coordinate [4Fe-4S] cluster. A Radical SAM core domain is found at 125-345; the sequence is ETGTATATIM…QTLGMEMGFR (221 aa).

The protein belongs to the radical SAM superfamily. Lipoyl synthase family. Requires [4Fe-4S] cluster as cofactor.

The protein resides in the mitochondrion. The enzyme catalyses [[Fe-S] cluster scaffold protein carrying a second [4Fe-4S](2+) cluster] + N(6)-octanoyl-L-lysyl-[protein] + 2 oxidized [2Fe-2S]-[ferredoxin] + 2 S-adenosyl-L-methionine + 4 H(+) = [[Fe-S] cluster scaffold protein] + N(6)-[(R)-dihydrolipoyl]-L-lysyl-[protein] + 4 Fe(3+) + 2 hydrogen sulfide + 2 5'-deoxyadenosine + 2 L-methionine + 2 reduced [2Fe-2S]-[ferredoxin]. It participates in protein modification; protein lipoylation via endogenous pathway; protein N(6)-(lipoyl)lysine from octanoyl-[acyl-carrier-protein]: step 2/2. In terms of biological role, catalyzes the radical-mediated insertion of two sulfur atoms into the C-6 and C-8 positions of the octanoyl moiety bound to the lipoyl domains of lipoate-dependent enzymes, thereby converting the octanoylated domains into lipoylated derivatives. The sequence is that of Lipoyl synthase 2, mitochondrial from Pisum sativum (Garden pea).